The following is a 553-amino-acid chain: Solute carrier family 22 member 12 (553 aa).

The chain crosses the membrane as a helical span at residues 16–36 (FQLLQAVALVTPILWVTTQNM). N-linked (GlcNAc...) asparagine glycosylation is found at N56, N102, and N107. 11 helical membrane passes run 146–166 (PMAQSIFLAGILVGAAVCGHA), 182–202 (LVSVSGTIAALMPTFPLYCLF), 204–224 (FLVASAVAGVMMNTASLLMEW), 232–252 (LMMTLNALGFSFGQVLTGSVA), 260–280 (MLQLAVSAPFFLFFVYSWWLP), 351–371 (FISMLCWFAFGFTFYGLALDL), 378–398 (IFLLQALIGIVDLPVKMGSLL), 407–427 (LCQASSLVLPGLCILANILVP), 435–455 (SSLAVLGLGSLGAAFTCVTIF), 466–486 (MTAVGLGQVAARGGAMLGPLV), and 495–515 (WLPLLVYGVVPVLSGLAALLL). S534 carries the post-translational modification Phosphoserine.

Belongs to the major facilitator (TC 2.A.1) superfamily. Organic cation transporter (TC 2.A.1.19) family. As to quaternary structure, interacts with PDZK1. In terms of processing, N-glycosylated. In terms of tissue distribution, expressed in the proximal tubular epithelial cells in kidney.

The protein resides in the apical cell membrane. It catalyses the reaction urate(out) + (S)-lactate(in) = urate(in) + (S)-lactate(out). It carries out the reaction nicotinate(in) + urate(out) = nicotinate(out) + urate(in). The enzyme catalyses urate(out) + n chloride(in) = urate(in) + n chloride(out). The catalysed reaction is orotate(out) + nicotinate(in) = orotate(in) + nicotinate(out). In terms of biological role, electroneutral antiporter that translocates urate across the apical membrane of proximal tubular cells in exchange for monovalent organic or inorganic anions. Involved in renal reabsorption of urate and helps maintaining blood levels of uric acid. Mediates urate uptake by an exchange with organic anions such as (S)-lactate and nicotinate, and inorganic anion Cl(-). Other inorganic anions such as Br(-), I(-) and NO3(-) may also act as counteranions that exchange for urate. Also mediates orotate tubular uptake coupled with nicotinate efflux and to a lesser extent with lactate efflux, therefore displaying a potential role in orotate renal reabsorption. Orotate transport is Cl(-)-dependent. The chain is Solute carrier family 22 member 12 (Slc22a12) from Rattus norvegicus (Rat).